Reading from the N-terminus, the 176-residue chain is Inner membrane-spanning protein YciB (176 aa).

A run of 5 helical transmembrane segments spans residues 24–44 (TATAVAIVATLVQIAWVAFRH), 49–69 (PMLWVSLGVVTVFGGATLVLH), 76–96 (WKPTVLYWAFSVALIVSQLAF), 119–139 (LSVVWAIFFVLLGLVNLFVAY), and 149–169 (FKLFGATGCLVVFIVGQSLWL).

The protein belongs to the YciB family.

The protein localises to the cell inner membrane. Plays a role in cell envelope biogenesis, maintenance of cell envelope integrity and membrane homeostasis. This chain is Inner membrane-spanning protein YciB, found in Paraburkholderia phytofirmans (strain DSM 17436 / LMG 22146 / PsJN) (Burkholderia phytofirmans).